Consider the following 435-residue polypeptide: ATP-dependent protease ATPase subunit HslU (435 aa).

ATP-binding positions include V18, G60–E65, D248, E313, and R385.

This sequence belongs to the ClpX chaperone family. HslU subfamily. In terms of assembly, a double ring-shaped homohexamer of HslV is capped on each side by a ring-shaped HslU homohexamer. The assembly of the HslU/HslV complex is dependent on binding of ATP.

It is found in the cytoplasm. Functionally, ATPase subunit of a proteasome-like degradation complex; this subunit has chaperone activity. The binding of ATP and its subsequent hydrolysis by HslU are essential for unfolding of protein substrates subsequently hydrolyzed by HslV. HslU recognizes the N-terminal part of its protein substrates and unfolds these before they are guided to HslV for hydrolysis. This chain is ATP-dependent protease ATPase subunit HslU, found in Parvibaculum lavamentivorans (strain DS-1 / DSM 13023 / NCIMB 13966).